The following is a 303-amino-acid chain: Taste receptor type 2 member 2 (303 aa).

Topologically, residues 1-10 (MALSFSAILH) are extracellular. Residues 11–31 (IIMMSAEFFTGITVNGFLIIV) traverse the membrane as a helical segment. Over 32-56 (NCNELIKHRKLMPIQILLMCIGMSR) the chain is Cytoplasmic. The helical transmembrane segment at 57–77 (FGLQMVLMVQSFFSVFFPLLY) threads the bilayer. Residues 78-79 (VK) are Extracellular-facing. A helical transmembrane segment spans residues 80 to 100 (IIYGAAMMFLWMFFSSISLWF). The Cytoplasmic portion of the chain corresponds to 101–102 (AT). The helical transmembrane segment at 103 to 123 (CLSVFYCLKISGFTQSCFLWL) threads the bilayer. At 124 to 129 (KFRIPK) the chain is on the extracellular side. Residues 130–150 (LIPWLLLGSVLASVSIASVCI) form a helical membrane-spanning segment. The Cytoplasmic portion of the chain corresponds to 151–185 (EVDYAKNVEEDALRNTTLKKSKTKIKKISEVLLVN). Residues 186–206 (LALIFPLAIFVMCTSMLLISL) traverse the membrane as a helical segment. Residues 207–234 (YKHTHRMQHGSHGFRNANTEAHINALKT) lie on the Extracellular side of the membrane. The chain crosses the membrane as a helical span at residues 235 to 255 (VITFFCFFISYFAAFMTNMTF). Residues 256 to 277 (SLPYRSHQFFMLKDIMAAYPSG) lie on the Cytoplasmic side of the membrane.

The protein belongs to the G-protein coupled receptor T2R family.

It localises to the cell membrane. Functionally, bitter taste receptor that detects natural and synthetic bitter compounds. This chain is Taste receptor type 2 member 2, found in Homo sapiens (Human).